We begin with the raw amino-acid sequence, 1482 residues long: Cystic fibrosis transmembrane conductance regulator (1482 aa).

The Cytoplasmic segment spans residues Met1 to Phe77. A helical transmembrane segment spans residues Phe78–Gln98. The ABC transmembrane type-1 1 domain maps to Phe81–Leu365. The Extracellular segment spans residues Pro99–Tyr122. The chain crosses the membrane as a helical span at residues Leu123 to His146. At His147–Leu195 the chain is on the cytoplasmic side. The helical transmembrane segment at Ala196 to Trp216 threads the bilayer. Residues Glu217 to Ser222 are Extracellular-facing. The chain crosses the membrane as a helical span at residues Ala223–Met243. The Cytoplasmic segment spans residues Met244 to Lys298. The chain crosses the membrane as a helical span at residues Ala299–Phe319. The Extracellular portion of the chain corresponds to Leu320–Thr339. Residues Ile340–Val358 traverse the membrane as a helical segment. The Cytoplasmic portion of the chain corresponds to Gln359–Asn859. ATP is bound by residues Trp401, Gly458 to Thr465, and Gln493. One can recognise an ABC transporter 1 domain in the interval Ser423 to Gly646. Cys524 carries the S-palmitoyl cysteine lipid modification. A phosphoserine mark is found at Ser549 and Ser660. A disordered R region region spans residues Ser654–Glu832. Ser670 carries the post-translational modification Phosphoserine; by PKA. Ser686 carries the post-translational modification Phosphoserine. Lys688 participates in a covalent cross-link: Glycyl lysine isopeptide (Lys-Gly) (interchain with G-Cter in ubiquitin). 2 positions are modified to phosphoserine: Ser700 and Ser712. Thr717 carries the phosphothreonine modification. 5 positions are modified to phosphoserine: Ser737, Ser768, Ser791, Ser796, and Ser814. A helical membrane pass occupies residues Leu860–Val880. The ABC transmembrane type-1 2 domain occupies Leu860 to Ser1156. Residues Ala881–Ile919 are Extracellular-facing. N-linked (GlcNAc...) asparagine glycosylation is found at Asn895 and Asn901. A discontinuously helical transmembrane segment spans residues Tyr920 to His940. The Cytoplasmic segment spans residues Thr941–Thr991. Residues Ile992 to Leu1012 form a helical membrane-spanning segment. Residues Lys1013–Pro1014 lie on the Extracellular side of the membrane. Residues Tyr1015–Leu1035 form a helical membrane-spanning segment. Topologically, residues Gln1036–Thr1096 are cytoplasmic. The helical transmembrane segment at Leu1097–Phe1117 threads the bilayer. The Extracellular segment spans residues Ile1118–Gly1131. Residues Ile1132–Ile1152 traverse the membrane as a helical segment. At Asp1153–Leu1482 the chain is on the cytoplasmic side. An ABC transporter 2 domain is found at Ile1212–Pro1445. Residues Tyr1221 and Gly1246–Ser1253 contribute to the ATP site. The segment at Arg1388–Leu1482 is interaction with GORASP2. Residue Cys1397 is the site of S-palmitoyl cysteine attachment. Ser1446 and Ser1458 each carry phosphoserine. The interval Gln1454–Leu1482 is disordered. Acidic residues predominate over residues Glu1472–Leu1482. Positions Thr1480–Leu1482 match the PDZ-binding motif.

This sequence belongs to the ABC transporter superfamily. ABCC family. CFTR transporter (TC 3.A.1.202) subfamily. As to quaternary structure, monomer; does not require oligomerization for channel activity. May form oligomers in the membrane. Interacts with SLC26A3, SLC26A6 and NHERF1. Interacts with SHANK2. Interacts with MYO6. Interacts (via C-terminus) with GOPC (via PDZ domain); this promotes CFTR internalization and thereby decreases channel activity. Interacts with SLC4A7 through NHERF1. Found in a complex with MYO5B and RAB11A. Interacts with ANO1. Interacts with SLC26A8. Interacts with AHCYL1; the interaction increases CFTR activity. Interacts with CSE1L. The core-glycosylated form interacts with GORASP2 (via PDZ GRASP-type 1 domain) in respone to ER stress. Interacts with MARCHF2; the interaction leads to CFTR ubiqtuitination and degradation. Interacts with ADGRG2. N-glycosylated. In terms of processing, phosphorylated; cAMP treatment promotes phosphorylation and activates the channel. Dephosphorylation decreases the ATPase activity (in vitro). Phosphorylation at PKA sites activates the channel. Phosphorylation at PKC sites enhances the response to phosphorylation by PKA. Phosphorylated by AMPK; this inhibits channel activity. Post-translationally, ubiquitinated, leading to its degradation in the lysosome. Deubiquitination by USP10 in early endosomes enhances its endocytic recycling to the cell membrane. Ubiquitinated by RNF185 during ER stress. Ubiquitinated by MARCHF2.

Its subcellular location is the apical cell membrane. It is found in the early endosome membrane. It localises to the cell membrane. The protein resides in the recycling endosome membrane. The protein localises to the endoplasmic reticulum membrane. Its subcellular location is the nucleus. The enzyme catalyses ATP + H2O + closed Cl(-) channel = ADP + phosphate + open Cl(-) channel.. It catalyses the reaction chloride(in) = chloride(out). It carries out the reaction hydrogencarbonate(in) = hydrogencarbonate(out). The catalysed reaction is ATP + H2O = ADP + phosphate + H(+). Its function is as follows. Epithelial ion channel that plays an important role in the regulation of epithelial ion and water transport and fluid homeostasis. Mediates the transport of chloride ions across the cell membrane. Possesses an intrinsic ATPase activity and utilizes ATP to gate its channel; the passive flow of anions through the channel is gated by cycles of ATP binding and hydrolysis by the ATP-binding domains. The ion channel is also permeable to HCO(3)(-); selectivity depends on the extracellular chloride concentration. Exerts its function also by modulating the activity of other ion channels and transporters. Contributes to the regulation of the pH and the ion content of the epithelial fluid layer. Modulates the activity of the epithelial sodium channel (ENaC) complex, in part by regulating the cell surface expression of the ENaC complex. May regulate bicarbonate secretion and salvage in epithelial cells by regulating the transporter SLC4A7. Can inhibit the chloride channel activity of ANO1. Plays a role in the chloride and bicarbonate homeostasis during sperm epididymal maturation and capacitation. In Rhinolophus ferrumequinum (Greater horseshoe bat), this protein is Cystic fibrosis transmembrane conductance regulator.